The following is a 225-amino-acid chain: Holliday junction branch migration complex subunit RuvA (225 aa).

Residues 1–68 (MIGWLQGQKV…DDGSSLFGFP (68 aa)) are domain I. The interval 69 to 147 (ERRERDMFRT…EFSCRDPGMS (79 aa)) is domain II. The interval 148-158 (LVDNGVIDSHQ) is flexible linker. The segment at 159–225 (LKDSSLHELQ…SLRWLSQEAA (67 aa)) is domain III.

It belongs to the RuvA family. In terms of assembly, homotetramer. Forms an RuvA(8)-RuvB(12)-Holliday junction (HJ) complex. HJ DNA is sandwiched between 2 RuvA tetramers; dsDNA enters through RuvA and exits via RuvB. An RuvB hexamer assembles on each DNA strand where it exits the tetramer. Each RuvB hexamer is contacted by two RuvA subunits (via domain III) on 2 adjacent RuvB subunits; this complex drives branch migration. In the full resolvosome a probable DNA-RuvA(4)-RuvB(12)-RuvC(2) complex forms which resolves the HJ.

The protein localises to the cytoplasm. Its function is as follows. The RuvA-RuvB-RuvC complex processes Holliday junction (HJ) DNA during genetic recombination and DNA repair, while the RuvA-RuvB complex plays an important role in the rescue of blocked DNA replication forks via replication fork reversal (RFR). RuvA specifically binds to HJ cruciform DNA, conferring on it an open structure. The RuvB hexamer acts as an ATP-dependent pump, pulling dsDNA into and through the RuvAB complex. HJ branch migration allows RuvC to scan DNA until it finds its consensus sequence, where it cleaves and resolves the cruciform DNA. The protein is Holliday junction branch migration complex subunit RuvA of Prochlorococcus marinus (strain MIT 9313).